A 536-amino-acid chain; its full sequence is Pre-mRNA-splicing factor SLU7 (536 aa).

Residues 22–42 (EARKAGLAPAEVDEDGKEINP) are disordered. Residues 94–111 (GACENCGAMTHDKKSCME) form a CCHC-type zinc finger. The tract at residues 178 to 201 (KLEEKDGEEGDENVASEEEDEEDG) is disordered. Residues 182–200 (KDGEEGDENVASEEEDEED) are compositionally biased toward acidic residues.

Belongs to the SLU7 family.

It is found in the nucleus. Participates in the second catalytic step of pre-mRNA splicing, when the free hydroxyl group of exon I attacks the 3'-splice site to generate spliced mRNA and the excised lariat intron. This chain is Pre-mRNA-splicing factor SLU7, found in Oryza sativa subsp. indica (Rice).